Consider the following 502-residue polypeptide: Maturase K (502 aa).

Belongs to the intron maturase 2 family. MatK subfamily.

Its subcellular location is the plastid. The protein resides in the chloroplast. Its function is as follows. Usually encoded in the trnK tRNA gene intron. Probably assists in splicing its own and other chloroplast group II introns. This Ipomoea purpurea (Common morning glory) protein is Maturase K.